A 206-amino-acid polypeptide reads, in one-letter code: Thymidylate kinase (206 aa).

ATP is bound at residue glycine 11–threonine 18.

It belongs to the thymidylate kinase family.

The enzyme catalyses dTMP + ATP = dTDP + ADP. Functionally, phosphorylation of dTMP to form dTDP in both de novo and salvage pathways of dTTP synthesis. The protein is Thymidylate kinase of Burkholderia lata (strain ATCC 17760 / DSM 23089 / LMG 22485 / NCIMB 9086 / R18194 / 383).